The following is a 487-amino-acid chain: Glycogen synthase (487 aa).

Position 19 (K19) interacts with ADP-alpha-D-glucose.

Belongs to the glycosyltransferase 1 family. Bacterial/plant glycogen synthase subfamily.

The catalysed reaction is [(1-&gt;4)-alpha-D-glucosyl](n) + ADP-alpha-D-glucose = [(1-&gt;4)-alpha-D-glucosyl](n+1) + ADP + H(+). Its pathway is glycan biosynthesis; glycogen biosynthesis. Its function is as follows. Synthesizes alpha-1,4-glucan chains using ADP-glucose. This Moorella thermoacetica (strain ATCC 39073 / JCM 9320) protein is Glycogen synthase.